The chain runs to 196 residues: Peptide deformylase (196 aa).

Positions 105 and 147 each coordinate Fe cation. Glu-148 is an active-site residue. His-151 contributes to the Fe cation binding site.

This sequence belongs to the polypeptide deformylase family. Requires Fe(2+) as cofactor.

The enzyme catalyses N-terminal N-formyl-L-methionyl-[peptide] + H2O = N-terminal L-methionyl-[peptide] + formate. In terms of biological role, removes the formyl group from the N-terminal Met of newly synthesized proteins. Requires at least a dipeptide for an efficient rate of reaction. N-terminal L-methionine is a prerequisite for activity but the enzyme has broad specificity at other positions. The sequence is that of Peptide deformylase from Flavobacterium johnsoniae (strain ATCC 17061 / DSM 2064 / JCM 8514 / BCRC 14874 / CCUG 350202 / NBRC 14942 / NCIMB 11054 / UW101) (Cytophaga johnsonae).